Reading from the N-terminus, the 316-residue chain is Apolipoprotein E (316 aa).

A signal peptide spans 1–18 (MKALWAVLVVTLLAGCLA). 8 tandem repeats follow at residues 76–97 (VLME…EQLG), 98–119 (PMAE…SRLG), 120–141 (ADME…TMLG), 142–163 (QSTE…KRLM), 164–185 (RDAE…EGAE), 186–207 (RGVG…QRTA), 208–229 (NLGA…ARIR), and 230–251 (GRLE…EQME). Residues 76-251 (VLMEDTMTEL…RLEEVREQME (176 aa)) are 8 X 22 AA approximate tandem repeats. The residue at position 139 (Met-139) is a Methionine sulfoxide. Ser-143 bears the Phosphoserine mark. Positions 154-164 (HLRKLRKRLMR) are LDL and other lipoprotein receptors binding. 158-161 (LRKR) is a heparin binding site. The segment at 206 to 286 (TANLGAGAGK…GWFEPLVEDM (81 aa)) is lipid-binding and lipoprotein association. 225-232 (GARIRGRL) is a heparin binding site. Residues 262-316 (QQMRLQAEIFQARLKGWFEPLVEDMQRQWANLVEKIQASVAANPIPPSSVPQESQ) are homooligomerization. A specificity for association with VLDL region spans residues 274-286 (RLKGWFEPLVEDM).

Belongs to the apolipoprotein A1/A4/E family. In terms of assembly, homotetramer. May interact with ABCA1; functionally associated with ABCA1 in the biogenesis of HDLs. May interact with APP/A4 amyloid-beta peptide; the interaction is extremely stable in vitro but its physiological significance is unclear. May interact with MAPT. May interact with MAP2. In the cerebrospinal fluid, interacts with secreted SORL1. Interacts with PMEL; this allows the loading of PMEL luminal fragment on ILVs to induce fibril nucleation. Post-translationally, APOE exists as multiple glycosylated and sialylated glycoforms within cells and in plasma. The extent of glycosylation and sialylation are tissue and context specific. In terms of processing, glycated in plasma VLDL. Phosphorylated by FAM20C in the extracellular medium.

It localises to the secreted. The protein localises to the extracellular space. Its subcellular location is the extracellular matrix. The protein resides in the extracellular vesicle. It is found in the endosome. It localises to the multivesicular body. Its function is as follows. APOE is an apolipoprotein, a protein associating with lipid particles, that mainly functions in lipoprotein-mediated lipid transport between organs via the plasma and interstitial fluids. APOE is a core component of plasma lipoproteins and is involved in their production, conversion and clearance. Apolipoproteins are amphipathic molecules that interact both with lipids of the lipoprotein particle core and the aqueous environment of the plasma. As such, APOE associates with chylomicrons, chylomicron remnants, very low density lipoproteins (VLDL) and intermediate density lipoproteins (IDL) but shows a preferential binding to high-density lipoproteins (HDL). It also binds a wide range of cellular receptors including the LDL receptor/LDLR, the LDL receptor-related proteins LRP1, LRP2 and LRP8 and the very low-density lipoprotein receptor/VLDLR that mediate the cellular uptake of the APOE-containing lipoprotein particles. Finally, APOE also has a heparin-binding activity and binds heparan-sulfate proteoglycans on the surface of cells, a property that supports the capture and the receptor-mediated uptake of APOE-containing lipoproteins by cells. A main function of APOE is to mediate lipoprotein clearance through the uptake of chylomicrons, VLDLs, and HDLs by hepatocytes. APOE is also involved in the biosynthesis by the liver of VLDLs as well as their uptake by peripheral tissues ensuring the delivery of triglycerides and energy storage in muscle, heart and adipose tissues. By participating in the lipoprotein-mediated distribution of lipids among tissues, APOE plays a critical role in plasma and tissues lipid homeostasis. APOE is also involved in two steps of reverse cholesterol transport, the HDLs-mediated transport of cholesterol from peripheral tissues to the liver, and thereby plays an important role in cholesterol homeostasis. First, it is functionally associated with ABCA1 in the biogenesis of HDLs in tissues. Second, it is enriched in circulating HDLs and mediates their uptake by hepatocytes. APOE also plays an important role in lipid transport in the central nervous system, regulating neuron survival and sprouting. This chain is Apolipoprotein E (Apoe), found in Onychomys torridus (Southern grasshopper mouse).